A 65-amino-acid polypeptide reads, in one-letter code: uncharacterized protein (65 aa).

This is an uncharacterized protein from Vaccinia virus (strain Copenhagen) (VACV).